The following is a 131-amino-acid chain: D-ribose pyranase (131 aa).

The active-site Proton donor is the His20. Substrate-binding positions include Asp28, His98, and 120 to 122 (YAN).

The protein belongs to the RbsD / FucU family. RbsD subfamily. As to quaternary structure, homodecamer.

The protein localises to the cytoplasm. It catalyses the reaction beta-D-ribopyranose = beta-D-ribofuranose. The protein operates within carbohydrate metabolism; D-ribose degradation; D-ribose 5-phosphate from beta-D-ribopyranose: step 1/2. Its function is as follows. Catalyzes the interconversion of beta-pyran and beta-furan forms of D-ribose. The polypeptide is D-ribose pyranase (Chloroflexus aggregans (strain MD-66 / DSM 9485)).